Reading from the N-terminus, the 294-residue chain is Ribosomal protein L11 methyltransferase (294 aa).

Residues Thr146, Gly167, Asp189, and Asn231 each coordinate S-adenosyl-L-methionine.

It belongs to the methyltransferase superfamily. PrmA family.

Its subcellular location is the cytoplasm. It carries out the reaction L-lysyl-[protein] + 3 S-adenosyl-L-methionine = N(6),N(6),N(6)-trimethyl-L-lysyl-[protein] + 3 S-adenosyl-L-homocysteine + 3 H(+). In terms of biological role, methylates ribosomal protein L11. This chain is Ribosomal protein L11 methyltransferase, found in Photobacterium profundum (strain SS9).